The following is a 307-amino-acid chain: Dihydroorotate dehydrogenase A (fumarate) (307 aa).

Residues S21 and 46-47 contribute to the FMN site; that span reads KT. Residues K46, 70-74, and N130 each bind substrate; that span reads NSVGL. FMN is bound at residue N130. Catalysis depends on C133, which acts as the Nucleophile. The FMN site is built by K168 and I194. 195-196 contributes to the substrate binding site; sequence NT. FMN-binding positions include G220, 246-247, and 268-269; these read GG and GS.

Belongs to the dihydroorotate dehydrogenase family. Type 1 subfamily. In terms of assembly, homodimer. FMN is required as a cofactor.

Its subcellular location is the cytoplasm. It carries out the reaction (S)-dihydroorotate + fumarate = orotate + succinate. It participates in pyrimidine metabolism; UMP biosynthesis via de novo pathway. Functionally, catalyzes the conversion of dihydroorotate to orotate with fumarate as the electron acceptor. This is Dihydroorotate dehydrogenase A (fumarate) (pyrD) from Lactobacillus helveticus (strain DPC 4571).